Reading from the N-terminus, the 560-residue chain is Alpha-keto-acid decarboxylase (560 aa).

Position 61 (Glu61) interacts with thiamine diphosphate. The segment at 396-478 (TSFYGMADHR…VVVNNDGYTV (83 aa)) is thiamine pyrophosphate binding. 3 residues coordinate Mg(2+): Asp446, Asn473, and Gly475.

It belongs to the TPP enzyme family. The cofactor is a metal cation. Thiamine diphosphate serves as cofactor.

Its function is as follows. Decarboxylates branched-chain and aromatic alpha-keto acids to aldehydes. The chain is Alpha-keto-acid decarboxylase (kdc) from Mycobacterium tuberculosis (strain CDC 1551 / Oshkosh).